Consider the following 500-residue polypeptide: Na(+)/H(+) antiporter NhaB (500 aa).

The next 12 membrane-spanning stretches (helical) occupy residues 28 to 50, 68 to 88, 98 to 118, 121 to 141, 145 to 165, 205 to 225, 244 to 264, 311 to 331, 350 to 370, 394 to 414, 449 to 469, and 477 to 497; these read FLLL…VLVG, GGLL…ALYA, LLLM…LLLF, LLLG…LAAL, FLDA…FFAV, LLMH…VGEP, QVAP…VLLE, VLIV…LLVI, FQEA…VAVI, MLFI…VATI, VATP…IAPL, and MVWM…WAVS.

It belongs to the NhaB Na(+)/H(+) (TC 2.A.34) antiporter family.

The protein resides in the cell inner membrane. It catalyses the reaction 2 Na(+)(in) + 3 H(+)(out) = 2 Na(+)(out) + 3 H(+)(in). Its function is as follows. Na(+)/H(+) antiporter that extrudes sodium in exchange for external protons. This chain is Na(+)/H(+) antiporter NhaB, found in Pseudomonas aeruginosa (strain UCBPP-PA14).